The sequence spans 191 residues: Orotate phosphoribosyltransferase (191 aa).

114 to 122 (EDVVTTGKS) provides a ligand contact to 5-phospho-alpha-D-ribose 1-diphosphate. The orotate site is built by Thr-118 and Arg-146.

It belongs to the purine/pyrimidine phosphoribosyltransferase family. PyrE subfamily. In terms of assembly, homodimer. Mg(2+) serves as cofactor.

The enzyme catalyses orotidine 5'-phosphate + diphosphate = orotate + 5-phospho-alpha-D-ribose 1-diphosphate. The protein operates within pyrimidine metabolism; UMP biosynthesis via de novo pathway; UMP from orotate: step 1/2. Catalyzes the transfer of a ribosyl phosphate group from 5-phosphoribose 1-diphosphate to orotate, leading to the formation of orotidine monophosphate (OMP). This chain is Orotate phosphoribosyltransferase, found in Clostridium botulinum (strain Loch Maree / Type A3).